An 86-amino-acid chain; its full sequence is UPF0180 protein CA_C1486 (86 aa).

It belongs to the UPF0180 family.

This Clostridium acetobutylicum (strain ATCC 824 / DSM 792 / JCM 1419 / IAM 19013 / LMG 5710 / NBRC 13948 / NRRL B-527 / VKM B-1787 / 2291 / W) protein is UPF0180 protein CA_C1486.